A 121-amino-acid chain; its full sequence is Histone H2B (121 aa).

A disordered region spans residues 1–27 (MAPKKAPAAAEKKVKKAPTTEKKNKKK). A2 is modified (n,N,N-trimethylalanine). N6-acetyllysine occurs at positions 5 and 41. A Glycyl lysine isopeptide (Lys-Gly) (interchain with G-Cter in ubiquitin) cross-link involves residue K115.

This sequence belongs to the histone H2B family. As to quaternary structure, the nucleosome is a histone octamer containing two molecules each of H2A, H2B, H3 and H4 assembled in one H3-H4 heterotetramer and two H2A-H2B heterodimers. The octamer wraps approximately 147 bp of DNA. Monoubiquitination of Lys-115 gives a specific tag for epigenetic transcriptional activation and is also prerequisite for histone H3 'Lys-4' and 'Lys-79' methylation. In terms of processing, acetylation occurs almost exclusively in the MAC.

Its subcellular location is the nucleus. It is found in the chromosome. Its function is as follows. Core component of nucleosome. Nucleosomes wrap and compact DNA into chromatin, limiting DNA accessibility to the cellular machineries which require DNA as a template. Histones thereby play a central role in transcription regulation, DNA repair, DNA replication and chromosomal stability. DNA accessibility is regulated via a complex set of post-translational modifications of histones, also called histone code, and nucleosome remodeling. The sequence is that of Histone H2B from Tetrahymena pyriformis.